The primary structure comprises 656 residues: Macrolide export ATP-binding/permease protein MacB (656 aa).

The region spanning 6–244 (LEVSACYRSF…AAPKTEVIPA (239 aa)) is the ABC transporter domain. Residue 42 to 49 (GASGSGKS) coordinates ATP. Helical transmembrane passes span 277–297 (FLTMLGIIIGIASVVSVVALG), 531–551 (LLISAIAVISLVVGGIGVMNI), 586–606 (LVCLCGGALGVALAYLIGVVF), and 621–641 (SIVAAFACSTLIGVLFGFLPA).

It belongs to the ABC transporter superfamily. Macrolide exporter (TC 3.A.1.122) family. Homodimer. Part of the tripartite efflux system MacAB-TolC, which is composed of an inner membrane transporter, MacB, a periplasmic membrane fusion protein, MacA, and an outer membrane component, TolC. The complex forms a large protein conduit and can translocate molecules across both the inner and outer membranes. Interacts with MacA.

The protein localises to the cell inner membrane. Its function is as follows. Part of the tripartite efflux system MacAB-TolC. MacB is a non-canonical ABC transporter that contains transmembrane domains (TMD), which form a pore in the inner membrane, and an ATP-binding domain (NBD), which is responsible for energy generation. Confers resistance against macrolides. The chain is Macrolide export ATP-binding/permease protein MacB from Shewanella sp. (strain ANA-3).